A 262-amino-acid polypeptide reads, in one-letter code: MENSFKAALKAGRPQIGLWLGLSSSYSAELLAGAGFDWLLIDGEHTPNNVQTVLTQLQAIAPYPSQPVVRPSWNDPVQIKQLLDVGTQTLLVPMVQNADEAREAVRATRYPPAGIRGVGSALARASRWNRIPDYLQKANDQMCVLVQIETREAMKNLPQILDVEGVDGVFIGPADLSADMGYAGNPQHPEVQAAIEQAIVQIREAGKAPGILIANEQLAKRYLELGALFVAVGVDTTLLARAAEALAARFGAQATAVKPGVY.

His45 functions as the Proton acceptor in the catalytic mechanism. Gln147 is a binding site for substrate. Glu149 lines the a divalent metal cation pocket. Positions 174 and 175 each coordinate substrate. Asp175 provides a ligand contact to a divalent metal cation.

The protein belongs to the HpcH/HpaI aldolase family. As to quaternary structure, homohexamer; trimer of dimers. Requires a divalent metal cation as cofactor.

It carries out the reaction 4-hydroxy-2-oxoheptanedioate = succinate semialdehyde + pyruvate. It functions in the pathway aromatic compound metabolism; 4-hydroxyphenylacetate degradation; pyruvate and succinate semialdehyde from 4-hydroxyphenylacetate: step 7/7. Its function is as follows. Catalyzes the reversible retro-aldol cleavage of 4-hydroxy-2-ketoheptane-1,7-dioate (HKHD) to pyruvate and succinic semialdehyde. This chain is 4-hydroxy-2-oxo-heptane-1,7-dioate aldolase, found in Shigella sonnei (strain Ss046).